An 827-amino-acid polypeptide reads, in one-letter code: Protein SEY1 (827 aa).

The interval 1-26 is disordered; sequence MSQSSPSNAETDEDLSTTSSSSSFVP. At 1 to 719 the chain is on the cytoplasmic side; the sequence is MSQSSPSNAE…KRSIVQHVTQ (719 aa). The 229-residue stretch at 63–291 folds into the GB1/RHD3-type G domain; sequence GNNYHIISVF…VKKDLFRPNY (229 aa). GTP is bound at residue 73-80; that stretch reads GSQSTGKS. Coiled-coil stretches lie at residues 389 to 409 and 472 to 492; these read KSVY…KFRE and VSNL…VELK. A helical membrane pass occupies residues 720–740; sequence IPYYIYLVIMVLGWNEFMAIV. Residues 741–743 are Lumenal-facing; the sequence is RNP. A helical membrane pass occupies residues 744-764; sequence LFFSLVLVFGAGLYILYSMNL. Topologically, residues 765-827 are cytoplasmic; that stretch reads LKPAMVVVQR…VVETIEMQDL (63 aa). Positions 803–823 form a coiled coil; that stretch reads QKISASNREKVEEEKVVETIE.

It belongs to the TRAFAC class dynamin-like GTPase superfamily. GB1/RHD3 GTPase family. RHD3 subfamily.

Its subcellular location is the endoplasmic reticulum membrane. In terms of biological role, cooperates with the reticulon proteins and tubule-shaping DP1 family proteins to generate and maintain the structure of the tubular endoplasmic reticulum network. Has GTPase activity, which is required for its function in ER organization. This Scheffersomyces stipitis (strain ATCC 58785 / CBS 6054 / NBRC 10063 / NRRL Y-11545) (Yeast) protein is Protein SEY1.